A 1067-amino-acid chain; its full sequence is Myocardin-related transcription factor B (1067 aa).

3 RPEL repeats span residues 46–71 (EVLQ…PPLK), 90–115 (NFLK…EETL), and 134–159 (DDLN…PVDL). Disordered stretches follow at residues 175–223 (NLDT…NTTI) and 249–286 (PLSC…PRVK). 2 stretches are compositionally biased toward polar residues: residues 193–203 (QPASQESQGSA) and 212–223 (SDSSSPVSNTTI). Over residues 268–283 (KHTEKPRSKKSKDPKP) the composition is skewed to basic and acidic residues. Residues 390-424 (LDDMKVAELKMELKLRGLPVSGTKMDLIERLKPFQ) form the SAP domain. The stretch at 540–594 (GNTPNVELDAVEKDRKLQEKEKQIEELKRKLEQEQKLVEVLKKQLELEKRGQQQQ) forms a coiled coil. Residues 799 to 819 (ISTSAQPQRSTQLTAVQNGPT) are compositionally biased toward polar residues. A disordered region spans residues 799–829 (ISTSAQPQRSTQLTAVQNGPTSLHEKSSTPP).

As to quaternary structure, interacts with SRF.

The protein resides in the nucleus. Its function is as follows. Poor transcriptional factor which uses the canonical single or multiple CArG boxes DNA sequence. Acts as a cofactor of serum response factor (SRF) with the potential to modulate SRF target genes. The polypeptide is Myocardin-related transcription factor B (mrtfb) (Xenopus laevis (African clawed frog)).